The following is a 204-amino-acid chain: uncharacterized protein (204 aa).

Positions 1-17 (MKRLVTGLLALSLFLAA) are cleaved as a signal peptide. Residues 17-102 (ACGQDSDQQK…NQSSNNQKSS (86 aa)) form a disordered region. Cys-18 carries the N-palmitoyl cysteine lipid modification. A lipid anchor (S-diacylglycerol cysteine) is attached at Cys-18. The span at 23–70 (DQQKDSNKEKDDKAKTEQQDKKTNDSSKDKKDNKDDSKDVNKDNKDNS) shows a compositional bias: basic and acidic residues. Residues 71 to 102 (ANDNQQQSNSNATNNDQNQTNNNQSSNNQKSS) are compositionally biased toward low complexity.

Its subcellular location is the cell membrane. This is an uncharacterized protein from Staphylococcus aureus (strain Mu50 / ATCC 700699).